The following is a 605-amino-acid chain: DNA primase (605 aa).

The CHC2-type zinc-finger motif lies at C38–C62. Residues D260–G341 form the Toprim domain. Mg(2+) contacts are provided by E266, D310, and D312.

The protein belongs to the DnaG primase family. In terms of assembly, monomer. Interacts with DnaB. Requires Zn(2+) as cofactor. It depends on Mg(2+) as a cofactor.

It catalyses the reaction ssDNA + n NTP = ssDNA/pppN(pN)n-1 hybrid + (n-1) diphosphate.. RNA polymerase that catalyzes the synthesis of short RNA molecules used as primers for DNA polymerase during DNA replication. In Staphylococcus aureus (strain MW2), this protein is DNA primase.